Consider the following 454-residue polypeptide: Bifunctional protein GlmU (454 aa).

The segment at Met1–Arg226 is pyrophosphorylase. UDP-N-acetyl-alpha-D-glucosamine is bound by residues Leu8–Gly11, Lys22, Gln73, Gly78–Thr79, Tyr100–Asp102, Gly137, Glu151, Asn166, and Asn224. Asp102 lines the Mg(2+) pocket. Asn224 is a Mg(2+) binding site. The segment at Val227 to Ala247 is linker. Residues Gly248–Lys454 form an N-acetyltransferase region. The UDP-N-acetyl-alpha-D-glucosamine site is built by Arg330 and Lys348. The Proton acceptor role is filled by His360. UDP-N-acetyl-alpha-D-glucosamine is bound by residues Tyr363 and Asn374. Acetyl-CoA is bound by residues Ala377, Asn383–Tyr384, Ser402, Ala420, and Arg437.

In the N-terminal section; belongs to the N-acetylglucosamine-1-phosphate uridyltransferase family. The protein in the C-terminal section; belongs to the transferase hexapeptide repeat family. Homotrimer. Requires Mg(2+) as cofactor.

It localises to the cytoplasm. The enzyme catalyses alpha-D-glucosamine 1-phosphate + acetyl-CoA = N-acetyl-alpha-D-glucosamine 1-phosphate + CoA + H(+). It catalyses the reaction N-acetyl-alpha-D-glucosamine 1-phosphate + UTP + H(+) = UDP-N-acetyl-alpha-D-glucosamine + diphosphate. Its pathway is nucleotide-sugar biosynthesis; UDP-N-acetyl-alpha-D-glucosamine biosynthesis; N-acetyl-alpha-D-glucosamine 1-phosphate from alpha-D-glucosamine 6-phosphate (route II): step 2/2. It participates in nucleotide-sugar biosynthesis; UDP-N-acetyl-alpha-D-glucosamine biosynthesis; UDP-N-acetyl-alpha-D-glucosamine from N-acetyl-alpha-D-glucosamine 1-phosphate: step 1/1. It functions in the pathway bacterial outer membrane biogenesis; LPS lipid A biosynthesis. Functionally, catalyzes the last two sequential reactions in the de novo biosynthetic pathway for UDP-N-acetylglucosamine (UDP-GlcNAc). The C-terminal domain catalyzes the transfer of acetyl group from acetyl coenzyme A to glucosamine-1-phosphate (GlcN-1-P) to produce N-acetylglucosamine-1-phosphate (GlcNAc-1-P), which is converted into UDP-GlcNAc by the transfer of uridine 5-monophosphate (from uridine 5-triphosphate), a reaction catalyzed by the N-terminal domain. This is Bifunctional protein GlmU from Shewanella oneidensis (strain ATCC 700550 / JCM 31522 / CIP 106686 / LMG 19005 / NCIMB 14063 / MR-1).